The primary structure comprises 216 residues: Imidazole glycerol phosphate synthase subunit HisH (216 aa).

Residues 2-216 (SVAIVDYGSG…LISNFLKWKP (215 aa)) enclose the Glutamine amidotransferase type-1 domain. Cys-88 acts as the Nucleophile in catalysis. Active-site residues include His-196 and Glu-198.

Heterodimer of HisH and HisF.

It localises to the cytoplasm. It catalyses the reaction 5-[(5-phospho-1-deoxy-D-ribulos-1-ylimino)methylamino]-1-(5-phospho-beta-D-ribosyl)imidazole-4-carboxamide + L-glutamine = D-erythro-1-(imidazol-4-yl)glycerol 3-phosphate + 5-amino-1-(5-phospho-beta-D-ribosyl)imidazole-4-carboxamide + L-glutamate + H(+). The enzyme catalyses L-glutamine + H2O = L-glutamate + NH4(+). It functions in the pathway amino-acid biosynthesis; L-histidine biosynthesis; L-histidine from 5-phospho-alpha-D-ribose 1-diphosphate: step 5/9. IGPS catalyzes the conversion of PRFAR and glutamine to IGP, AICAR and glutamate. The HisH subunit catalyzes the hydrolysis of glutamine to glutamate and ammonia as part of the synthesis of IGP and AICAR. The resulting ammonia molecule is channeled to the active site of HisF. The sequence is that of Imidazole glycerol phosphate synthase subunit HisH from Rhodopseudomonas palustris (strain ATCC BAA-98 / CGA009).